The primary structure comprises 470 residues: Uronate isomerase (470 aa).

It belongs to the metallo-dependent hydrolases superfamily. Uronate isomerase family.

It carries out the reaction D-glucuronate = D-fructuronate. The catalysed reaction is aldehydo-D-galacturonate = keto-D-tagaturonate. It participates in carbohydrate metabolism; pentose and glucuronate interconversion. This chain is Uronate isomerase, found in Vibrio vulnificus (strain YJ016).